We begin with the raw amino-acid sequence, 236 residues long: 2,3,4,5-tetrahydropyridine-2,6-dicarboxylate N-acetyltransferase (236 aa).

Belongs to the transferase hexapeptide repeat family. DapH subfamily.

It carries out the reaction (S)-2,3,4,5-tetrahydrodipicolinate + acetyl-CoA + H2O = L-2-acetamido-6-oxoheptanedioate + CoA. It functions in the pathway amino-acid biosynthesis; L-lysine biosynthesis via DAP pathway; LL-2,6-diaminopimelate from (S)-tetrahydrodipicolinate (acetylase route): step 1/3. In terms of biological role, catalyzes the transfer of an acetyl group from acetyl-CoA to tetrahydrodipicolinate. This chain is 2,3,4,5-tetrahydropyridine-2,6-dicarboxylate N-acetyltransferase, found in Clostridium botulinum (strain Langeland / NCTC 10281 / Type F).